A 118-amino-acid polypeptide reads, in one-letter code: Large ribosomal subunit protein bL20 (118 aa).

This sequence belongs to the bacterial ribosomal protein bL20 family.

Its function is as follows. Binds directly to 23S ribosomal RNA and is necessary for the in vitro assembly process of the 50S ribosomal subunit. It is not involved in the protein synthesizing functions of that subunit. This chain is Large ribosomal subunit protein bL20, found in Lacticaseibacillus casei (strain BL23) (Lactobacillus casei).